A 524-amino-acid chain; its full sequence is Lysophospholipid acyltransferase LPCAT4 (524 aa).

Transmembrane regions (helical) follow at residues 40–62 (CLLG…FLLW) and 87–107 (TVCH…LGFL). Positions 129–134 (HSTFFD) match the HXXXXD motif motif. Residue N152 is glycosylated (N-linked (GlcNAc...) asparagine). The interval 490-524 (PHKPRSTSQIPNASSPSSPTALANGTVQAPKQKGD) is disordered. The segment covering 495–518 (STSQIPNASSPSSPTALANGTVQA) has biased composition (polar residues).

It belongs to the 1-acyl-sn-glycerol-3-phosphate acyltransferase family. In terms of tissue distribution, widely expressed with much higher level in brain. Expressed in erythroleukemic cells but not in reticulocytes.

Its subcellular location is the endoplasmic reticulum membrane. It carries out the reaction a 1-acyl-sn-glycero-3-phosphoethanolamine + an acyl-CoA = a 1,2-diacyl-sn-glycero-3-phosphoethanolamine + CoA. The enzyme catalyses a 1-O-(1Z-alkenyl)-sn-glycero-3-phosphoethanolamine + an acyl-CoA = a 1-O-(1Z-alkenyl)-2-acyl-sn-glycero-3-phosphoethanolamine + CoA. It catalyses the reaction a 1-acyl-sn-glycero-3-phosphocholine + an acyl-CoA = a 1,2-diacyl-sn-glycero-3-phosphocholine + CoA. The catalysed reaction is a 1-O-alkyl-sn-glycero-3-phosphocholine + acetyl-CoA = a 1-O-alkyl-2-acetyl-sn-glycero-3-phosphocholine + CoA. It carries out the reaction a 1-acyl-sn-glycero-3-phospho-L-serine + an acyl-CoA = a 1,2-diacyl-sn-glycero-3-phospho-L-serine + CoA. The enzyme catalyses octanoyl-CoA + a 1-acyl-sn-glycero-3-phosphoethanolamine = 1-acyl-2-octanoyl-sn-glycero-3-phosphoethanolamine + CoA. It catalyses the reaction a 1-acyl-sn-glycero-3-phosphoethanolamine + hexadecanoyl-CoA = 1-acyl-2-hexadecanoyl-sn-glycero-3-phosphoethanolamine + CoA. The catalysed reaction is a 1-acyl-sn-glycero-3-phosphoethanolamine + octadecanoyl-CoA = 1-acyl-2-octadecanoyl-sn-glycero-3-phosphoethanolamine + CoA. It carries out the reaction a 1-acyl-sn-glycero-3-phosphoethanolamine + (9Z)-octadecenoyl-CoA = 1-acyl-2-(9Z)-octadecenoyl-sn-glycero-3-phosphoethanolamine + CoA. The enzyme catalyses a 1-acyl-sn-glycero-3-phosphoethanolamine + (5Z,8Z,11Z,14Z)-eicosatetraenoyl-CoA = 1-acyl-2-(5Z,8Z,11Z,14Z)-eicosatetraenoyl-sn-glycero-3-phosphoethanolamine + CoA. It catalyses the reaction a 1-O-(1Z-alkenyl)-sn-glycero-3-phosphoethanolamine + octanoyl-CoA = 1-O-(1Z)-alkenyl-2-octanoyl-sn-glycero-3-phosphoethanolamine + CoA. The catalysed reaction is a 1-O-(1Z-alkenyl)-sn-glycero-3-phosphoethanolamine + hexadecanoyl-CoA = 1-O-(1Z)-alkenyl-2-hexadecanoyl-sn-glycero-3-phosphoethanolamine + CoA. It carries out the reaction a 1-O-(1Z-alkenyl)-sn-glycero-3-phosphoethanolamine + octadecanoyl-CoA = 1-O-(1Z)-alkenyl-2-octadecanoyl-sn-glycero-3-phosphoethanolamine + CoA. The enzyme catalyses a 1-O-(1Z-alkenyl)-sn-glycero-3-phosphoethanolamine + (9Z)-octadecenoyl-CoA = 1-O-(1Z)-alkenyl-2-(9Z)-octadecenoyl-sn-glycero-3-phosphoethanolamine + CoA. It catalyses the reaction a 1-O-(1Z-alkenyl)-sn-glycero-3-phosphoethanolamine + (5Z,8Z,11Z,14Z)-eicosatetraenoyl-CoA = 1-O-(1Z)-alkenyl-2-(5Z,8Z,11Z,14Z)-eicosatetraenoyl-sn-glycero-3-phosphoethanolamine + CoA. The catalysed reaction is a 1-acyl-sn-glycero-3-phosphocholine + hexadecanoyl-CoA = 1-acyl-2-hexadecanoyl-sn-glycero-3-phosphocholine + CoA. It carries out the reaction a 1-acyl-sn-glycero-3-phosphocholine + (9Z)-octadecenoyl-CoA = a 1-acyl-2-(9Z)-octadecenoyl-sn-glycero-3-phosphocholine + CoA. The enzyme catalyses 1-O-hexadecyl-sn-glycero-3-phosphocholine + (9Z)-octadecenoyl-CoA = 1-O-hexadecyl-2-(9Z)-octadecenoyl-sn-glycero-3-phosphocholine + CoA. It catalyses the reaction 1-O-hexadecyl-sn-glycero-3-phosphocholine + (5Z,8Z,11Z,14Z)-eicosatetraenoyl-CoA = 1-O-hexadecyl-2-(5Z,8Z,11Z,14Z)-eicosatetraenoyl-sn-glycero-3-phosphocholine + CoA. The catalysed reaction is 1-hexadecanoyl-sn-glycero-3-phospho-L-serine + (9Z)-octadecenoyl-CoA = 1-hexadecanoyl-2-(9Z-octadecenoyl)-sn-glycero-3-phospho-L-serine + CoA. It carries out the reaction 1-octadecanoyl-sn-glycero-3-phospho-(1'-sn-glycerol) + (9Z)-octadecenoyl-CoA = 1-octadecanoyl-2-(9Z-octadecenoyl)-sn-glycero-3-phospho-(1'-sn-glycerol) + CoA. The enzyme catalyses 1-octadecanoyl-sn-glycero-3-phospho-(1'-sn-glycerol) + (5Z,8Z,11Z,14Z)-eicosatetraenoyl-CoA = 1-octadecanoyl-2-(5Z,8Z,11Z,14Z-eicosatetraenoyl)-sn-glycero-3-phospho-(1'-sn-glycerol) + CoA. It participates in lipid metabolism; phospholipid metabolism. Functionally, displays acyl-CoA-dependent lysophospholipid acyltransferase activity with a subset of lysophospholipids as substrates; converts lysophosphatidylethanolamine to phosphatidylethanolamine, 1-alkenyl-lysophatidylethanolamine to 1-alkenyl-phosphatidylethanolamine, lysophosphatidylglycerol and alkyl-lysophosphatidylcholine to phosphatidylglycerol and alkyl-phosphatidylcholine, respectively. In contrast, has no lysophosphatidylinositol, glycerol-3-phosphate, diacylglycerol or lysophosphatidic acid acyltransferase activity. Prefers long chain acyl-CoAs (C16, C18) as acyl donors. Converts lysophosphatidylcholine to phosphatidycholine. This chain is Lysophospholipid acyltransferase LPCAT4 (Lpcat4), found in Mus musculus (Mouse).